The chain runs to 2211 residues: Norsolorinic acid synthase stcA (2211 aa).

Positions 11–251 (FLFGDQTYDF…REIPIYVPAH (241 aa)) are starter unit:ACP transacylase (SAT) domain. Positions 358–378 (PAEPPTSINKTPERYSHRPGS) are disordered. The span at 368 to 378 (TPERYSHRPGS) shows a compositional bias: basic and acidic residues. In terms of domain architecture, Ketosynthase family 3 (KS3) spans 380-812 (RGKLAIVSMS…GGNTAVLVED (433 aa)). Residues C552, H687, and H730 each act as for beta-ketoacyl synthase activity in the active site. The segment at 912-1201 (IACSGQGSQY…MAGMIKTTLD (290 aa)) is malonyl-CoA:ACP transacylase (MAT) domain. S1004 functions as the For acyl/malonyl transferase activity in the catalytic mechanism. Residues 1289–1316 (TATSDYQLPSDEQVAAKRPSKQDESKEA) are disordered. Positions 1327-1468 (HRVVEEKTEP…CTVRFTSEAQ (142 aa)) are N-terminal hotdog fold. In terms of domain architecture, PKS/mFAS DH spans 1327–1643 (HRVVEEKTEP…LRRVPRRGLR (317 aa)). The product template (PT) domain stretch occupies residues 1340–1643 (TLVVETDISR…LRRVPRRGLR (304 aa)). The active-site Proton acceptor; for dehydratase activity is H1359. Residues 1495-1643 (FIRYTTKSGY…LRRVPRRGLR (149 aa)) are C-terminal hotdog fold. The active-site Proton donor; for dehydratase activity is the D1555. The tract at residues 1655-1706 (RLHGNQQAVKTQAPQRAALKQKPQSSPTQPHASKVAYSRSATSPTAGKPVVA) is disordered. Polar residues-rich tracts occupy residues 1658 to 1668 (GNQQAVKTQAP) and 1676 to 1685 (KPQSSPTQPH). Carrier domains are found at residues 1712–1791 (REGD…SGSA) and 1839–1915 (DELF…GTTS). O-(pantetheine 4'-phosphoryl)serine is present on residues S1749 and S1873. Low complexity predominate over residues 1912–1926 (GTTSGSTTGSSGSGS). Positions 1912–1947 (GTTSGSTTGSSGSGSSEDETDSIPSTPEEYTTADTR) are disordered. A compositionally biased stretch (polar residues) spans 1934 to 1945 (IPSTPEEYTTAD). Residues 1969–2205 (ILFMLPDGGG…KEHVYLVREL (237 aa)) form a thioesterase/Claisen cyclase (TE/CLC) domain region. The active-site For thioesterase activity is S2039.

The cofactor is pantetheine 4'-phosphate.

It catalyses the reaction hexanoyl-[ACP] + 7 malonyl-CoA + 6 H(+) = noranthrone + holo-[ACP] + 7 CO2 + 7 CoA + 2 H2O. It participates in mycotoxin biosynthesis; sterigmatocystin biosynthesis. Functionally, non-reducing polyketide synthase; part of the gene cluster that mediates the biosynthesis of sterigmatocystin (ST), a polyketide-derived furanocoumarin which is part of the most toxic and carcinogenic compounds among the known mycotoxins. The first step in the biosynthesis of sterigmatocystin is the production of hexanoate by the fatty acid synthase (FAS) units stcJ and stcK. The polyketide backbone is assembled by the non-reducing polyketide synthase stcA by condensation of the starter hexanoyl-CoA and 7 malonyl-CoA extender units followed by cyclization and release of norsolorinic acid. Norsolorinic acid is the first stable intermediate in the biosynthesis of sterigmatocystin and is converted into averantin (AVN) by the ketoreductase stcE which reduces the hexanoate ketone to an alcohol. Averantin is then oxidized into 5'-hydroxyaverantin (HAVN) by the cytochrome P450 monooxygenase stcF. 5'-hydroxyaverantin is further converted to 5'-oxyaverantin (OAVN) by the 5'-hydroxyaverantin dehydrogenase stcG. The next step is the conversion of OAVN into averufin (AVF) which is catalyzed by a yet to be identified enzyme. The cytochrome P450 monooxygenase stcB and the flavin-binding monooxygenase stcW are both required for the conversion of averufin to 1-hydroxyversicolorone. The esterase stcI probably catalyzes the formation of versiconal hemiacetal acetate from 1-hydroxyversicolorone. The oxydoreductase stcN then probably catalyzes the biosynthetic step from versiconal to versicolorin B (VERB). The next step is performed by the versicolorin B desaturase stcL to produce versicolorin A (VERA). The ketoreductase stcU and the cytochrome P450 monooxygenase stcS are involved in the conversion of versicolorin A to demethylsterigmatocystin. The Baeyer-Villiger oxidas stcQ and the reductase stcR might be involved in the biosynthetic step from versicolorin A to demethylsterigmatocystin. The final step in the biosynthesis of sterigmatocystin is the methylation of demethylsterigmatocystin catalyzed by the methyltransferase stcP. This Emericella nidulans (strain FGSC A4 / ATCC 38163 / CBS 112.46 / NRRL 194 / M139) (Aspergillus nidulans) protein is Norsolorinic acid synthase stcA.